We begin with the raw amino-acid sequence, 173 residues long: Transcriptional repressor NrdR (173 aa).

A zinc finger spans residues 3–34 (CPYCGSLDTQVKDSRPTEDNTAIRRRRVCPDC). Residues 49–139 (LMVVKRSGRR…VYRNFREARD (91 aa)) form the ATP-cone domain.

This sequence belongs to the NrdR family. Zn(2+) serves as cofactor.

Negatively regulates transcription of bacterial ribonucleotide reductase nrd genes and operons by binding to NrdR-boxes. This is Transcriptional repressor NrdR from Azorhizobium caulinodans (strain ATCC 43989 / DSM 5975 / JCM 20966 / LMG 6465 / NBRC 14845 / NCIMB 13405 / ORS 571).